Consider the following 401-residue polypeptide: UPF0242 protein CPn_0755/CP_1117/CPj0755/CpB0783 (401 aa).

This sequence belongs to the UPF0242 family.

The polypeptide is UPF0242 protein CPn_0755/CP_1117/CPj0755/CpB0783 (Chlamydia pneumoniae (Chlamydophila pneumoniae)).